We begin with the raw amino-acid sequence, 717 residues long: Mitochondrial potassium channel ATP-binding subunit (717 aa).

The N-terminal 25 residues, 1–25 (MLVHLFRFGIRGGPVPGWSLQSLRF), are a transit peptide targeting the mitochondrion. 4 consecutive transmembrane segments (helical) span residues 127–147 (LLAL…NVQI), 178–198 (VQLL…LVLL), 278–298 (LMLA…GSGL), and 365–385 (NIAF…LVAG). Residues 132–419 (AAIVLALGAA…LSVLFGQVVR (288 aa)) form the ABC transmembrane type-1 domain. In terms of domain architecture, ABC transporter spans 454–691 (ITFQNVTFSY…GGLYSELIRR (238 aa)). Residue 489 to 496 (GQSGGGKT) coordinates ATP. Residues 695 to 717 (DASLTSTPPAEKPEDPKSCQSKA) form a disordered region.

The protein belongs to the ABC transporter superfamily. ABCB family. Multidrug resistance exporter (TC 3.A.1.201) subfamily. In terms of assembly, the mitochondrial potassium channel (mitoK(ATP)) is composed of 4 subunits of CCDC51/MITOK and 4 subunits of ABCB8/MITOSUR. Interacts with PAAT. Interacts with NRP1; NRP1 regulates ABCB8/MITOSUR protein levels in mitochondria.

It localises to the mitochondrion inner membrane. Channel activity inhibited by ATP via ABCB8/MITOSUR subunit. Functionally, ATP-binding subunit of the mitochondrial ATP-gated potassium channel (mitoK(ATP)). Together with pore-forming subunit CCDC51/MITOK of the mitoK(ATP) channel, mediates ATP-dependent potassium currents across the mitochondrial inner membrane. An increase in ATP intracellular levels closes the channel, inhibiting K(+) transport, whereas a decrease in ATP levels enhances K(+) uptake in the mitochondrial matrix. Plays a role in mitochondrial iron transport. Required for maintenance of normal cardiac function, possibly by influencing mitochondrial iron export and regulating the maturation of cytosolic iron sulfur cluster-containing enzymes. The protein is Mitochondrial potassium channel ATP-binding subunit of Mus musculus (Mouse).